The primary structure comprises 207 residues: Thymidylate kinase (207 aa).

12–19 (GVDGAGKS) is a binding site for ATP.

It belongs to the thymidylate kinase family.

It carries out the reaction dTMP + ATP = dTDP + ADP. Phosphorylation of dTMP to form dTDP in both de novo and salvage pathways of dTTP synthesis. The chain is Thymidylate kinase from Bordetella petrii (strain ATCC BAA-461 / DSM 12804 / CCUG 43448).